A 2227-amino-acid polypeptide reads, in one-letter code: Genome polyprotein (2227 aa).

2 short sequence motifs ((L)YPX(n)L motif) span residues Tyr167–Leu171 and Tyr200–Leu205. Residues Met766–Gln836 form an involved in P1-2A pentamerization region. The helical transmembrane segment at Thr1011–Ile1031 threads the bilayer. Residues Ile1043 to Glu1070 form a membrane-penetrating ability region. A coiled-coil region spans residues Lys1127 to Phe1152. The SF3 helicase domain maps to His1204–Met1366. Gly1230–Ser1237 is an ATP binding site. Residues Trp1462–Tyr1482 form a helical membrane-spanning segment. Tyr1499 carries the post-translational modification O-(5'-phospho-RNA)-tyrosine. The Peptidase C3 domain occupies Asp1514 to Phe1728. Catalysis depends on for protease 3C activity residues His1563, Asp1603, and Cys1691. Positions Asp1976–Asn2097 constitute a RdRp catalytic domain.

Belongs to the picornaviridae polyprotein family. Homodimer. Homomultimer; probably interacts with membranes in a multimeric form. Seems to assemble into amyloid-like fibers. As to quaternary structure, homodimer. Monomer. Interacts with protein 3CD. In terms of assembly, interacts with host ACBD3. Interacts with protein 3AB. As to quaternary structure, interacts with human MAVS. In terms of assembly, homodimer; disulfide-linked. Homopentamer. Homooligomer. As to quaternary structure, interacts with capsid protein VP2. Interacts with capsid protein VP3. In terms of assembly, interacts with capsid protein VP1. Interacts with capsid protein VP3. Interacts with capsid protein VP1. Interacts with capsid protein VP2. In terms of processing, specific enzymatic cleavages by viral protease in vivo yield a variety of precursors and mature proteins. Polyprotein processing intermediates are produced, such as P1-2A which is a functional precursor of the structural proteins, VP0 which is a VP4-VP2 precursor, VP1-2A precursor, 3ABC precursor which is a stable and catalytically active precursor of 3A, 3B and 3C proteins, 3AB and 3CD precursors. The assembly signal 2A is removed from VP1-2A by a host protease, possibly host Cathepsin L. This cleavage occurs over a region of 3 amino-acids probably generating VP1 proteins with heterogeneous C-termini. During virion maturation, immature virions are rendered infectious following cleavage of VP0 into VP4 and VP2. This maturation seems to be an autocatalytic event triggered by the presence of RNA in the capsid and is followed by a conformational change of the particle. Post-translationally, the assembly signal 2A is removed from VP1-2A by a host protease, possibly host Cathepsin L in naked virions. This cleavage does not occur in enveloped virions. This cleavage occurs over a region of 3 amino-acids probably generating VP1 proteins with heterogeneous C-termini. In terms of processing, VPg is uridylylated prior to priming replication into VPg-pUpU. Unlike other picornaviruses, does not seem to be myristoylated.

The protein localises to the virion. Its subcellular location is the host endosome. The protein resides in the host multivesicular body. It localises to the host membrane. It is found in the host mitochondrion outer membrane. The protein localises to the host cytoplasm. Its subcellular location is the host cytoplasmic vesicle membrane. The catalysed reaction is RNA(n) + a ribonucleoside 5'-triphosphate = RNA(n+1) + diphosphate. The enzyme catalyses a ribonucleoside 5'-triphosphate + H2O = a ribonucleoside 5'-diphosphate + phosphate + H(+). It carries out the reaction Selective cleavage of Gln-|-Gly bond in the poliovirus polyprotein. In other picornavirus reactions Glu may be substituted for Gln, and Ser or Thr for Gly.. In terms of biological role, capsid proteins VP1, VP2, and VP3 form a closed capsid enclosing the viral positive strand RNA genome. All these proteins contain a beta-sheet structure called beta-barrel jelly roll. Together they form an icosahedral capsid (T=3) composed of 60 copies of each VP1, VP2, and VP3, with a diameter of approximately 300 Angstroms. VP1 is situated at the 12 fivefold axes, whereas VP2 and VP3 are located at the quasi-sixfold axes. The naked capsid interacts with the host receptor HAVCR1 to provide virion attachment to and probably entry into the target cell. Its function is as follows. VP0 precursor is a component of the immature procapsids. Plays a role in the assembly of the 12 pentamers into an icosahedral structure. Has not been detected in mature virions, supposedly owing to its small size. Functionally, precursor component of immature procapsids that corresponds to an extended form of the structural protein VP1. After maturation, possibly by the host Cathepsin L, the assembly signal 2A is cleaved to give rise to the mature VP1 protein. In terms of biological role, functions as a viroporin. Affects membrane integrity and causes an increase in membrane permeability. Involved in host intracellular membrane rearrangements probably to give rise to the viral factories. Does not disrupt calcium homeostasis or glycoprotein trafficking. Antagonizes the innate immune response of the host by suppressing IFN-beta synthesis, which it achieves by interfering with the RIG-I/IFIH1 pathway. Its function is as follows. Affects membrane integrity and causes an increase in membrane permeability. Associates with and induces structural rearrangements of intracellular membranes. Displays RNA-binding activity. Functionally, the precursor 3ABC is targeted to the mitochondrial membrane where protease 3C activity cleaves and inhibits the host antiviral protein MAVS, thereby disrupting activation of IRF3 through the IFIH1/MDA5 pathway. In vivo, the protease activity of 3ABC precursor is more efficient in cleaving the 2BC precursor than that of protein 3C. The 3ABC precursor may therefore play a role in the proteolytic processing of the polyprotein. Possible viroporin. In terms of biological role, interacts with the 3CD precursor and with RNA structures found at both the 5'- and 3'-termini of the viral genome. Since the 3AB precursor contains the hydrophobic domain 3A, it probably anchors the whole viral replicase complex to intracellular membranes on which viral RNA synthesis occurs. Its function is as follows. May serve as membrane anchor to the 3AB and 3ABC precursors via its hydrophobic domain. May interact with RNA. Acts as a primer for viral RNA replication and remains covalently bound to viral genomic RNA. VPg is uridylylated prior to priming replication into VPg-pUpU. The VPg-pUpU is then used as primer on the genomic RNA poly(A) by the RNA-dependent RNA polymerase to replicate the viral genome. Functionally, cysteine protease that generates mature viral proteins from the precursor polyprotein. In addition to its proteolytic activity, it binds to viral RNA, and thus influences viral genome replication. RNA and substrate bind cooperatively to the protease. Cleaves IKBKG/NEMO to impair innate immune signaling. Cleaves host PABPC1 which may participate in the switch of viral translation to RNA synthesis. In terms of biological role, interacts with the 3AB precursor and with RNA structures found at both the 5'- and 3'-termini of the viral genome. Disrupts TLR3 signaling by degrading the host adapter protein TICAM1/TRIF. Its function is as follows. RNA-directed RNA polymerase 3D-POL replicates genomic and antigenomic RNA by recognizing replications specific signals. This is Genome polyprotein from Cercopithecus hamlyni (Owl-faced monkey).